The primary structure comprises 643 residues: Phosphomethylpyrimidine synthase (643 aa).

Residues Asn-248, Met-277, Tyr-306, His-342, 362–364 (SRG), 403–406 (DGLR), and Glu-442 contribute to the substrate site. Residue His-446 participates in Zn(2+) binding. Tyr-469 contributes to the substrate binding site. His-510 contributes to the Zn(2+) binding site. 3 residues coordinate [4Fe-4S] cluster: Cys-590, Cys-593, and Cys-598.

Belongs to the ThiC family. As to quaternary structure, homodimer. The cofactor is [4Fe-4S] cluster.

It catalyses the reaction 5-amino-1-(5-phospho-beta-D-ribosyl)imidazole + S-adenosyl-L-methionine = 4-amino-2-methyl-5-(phosphooxymethyl)pyrimidine + CO + 5'-deoxyadenosine + formate + L-methionine + 3 H(+). It participates in cofactor biosynthesis; thiamine diphosphate biosynthesis. Functionally, catalyzes the synthesis of the hydroxymethylpyrimidine phosphate (HMP-P) moiety of thiamine from aminoimidazole ribotide (AIR) in a radical S-adenosyl-L-methionine (SAM)-dependent reaction. The protein is Phosphomethylpyrimidine synthase of Burkholderia ambifaria (strain MC40-6).